The chain runs to 581 residues: Polypeptide N-acetylgalactosaminyltransferase 12 (581 aa).

At 1–19 the chain is on the cytoplasmic side; sequence MWGRTARRRCPRELRRGRE. A helical; Signal-anchor for type II membrane protein membrane pass occupies residues 20 to 37; that stretch reads ALLVLLALLALAGLGSVL. At 38–581 the chain is on the lumenal side; the sequence is RAQRGAGAGA…QKWFFKERML (544 aa). Residues 43–67 form a disordered region; sequence AGAGAAEPGPPRTPRPGRREPVMPR. 5 disulfides stabilise this stretch: C125–C358, C349–C422, C458–C479, C506–C521, and C547–C566. The interval 135 to 244 is catalytic subdomain A; that stretch reads LPRTSVIIAF…EGWLEPLLQR (110 aa). Substrate-binding residues include D176 and R205. Mn(2+) is bound by residues D228 and H230. Residues 304 to 366 form a catalytic subdomain B region; that stretch reads VIRSPTMAGG…PCSHVGHVFP (63 aa). W335 lines the substrate pocket. H363 is a Mn(2+) binding site. Y371 provides a ligand contact to substrate. Residues 445 to 577 form the Ricin B-type lectin domain; sequence FFGMLQNKGL…NSDHQKWFFK (133 aa).

Belongs to the glycosyltransferase 2 family. GalNAc-T subfamily. The cofactor is Mn(2+). Widely expressed at different levels of expression. Highly expressed in digestive organs such as small intestine, stomach, pancreas and colon. Expressed at intermediate level in testis, thyroid gland and spleen. Weakly expressed in whole brain, cerebral cortex, cerebellum, fetal brain, bone marrow, thymus, leukocytes, heart, skeletal muscle, liver, lung, esophagus, kidney, adrenal gland, mammary gland, uterus, placenta, ovary and prostate.

The protein localises to the golgi apparatus membrane. The catalysed reaction is L-seryl-[protein] + UDP-N-acetyl-alpha-D-galactosamine = a 3-O-[N-acetyl-alpha-D-galactosaminyl]-L-seryl-[protein] + UDP + H(+). It catalyses the reaction L-threonyl-[protein] + UDP-N-acetyl-alpha-D-galactosamine = a 3-O-[N-acetyl-alpha-D-galactosaminyl]-L-threonyl-[protein] + UDP + H(+). The protein operates within protein modification; protein glycosylation. Functionally, catalyzes the initial reaction in O-linked oligosaccharide biosynthesis, the transfer of an N-acetyl-D-galactosamine residue to a serine or threonine residue on the protein receptor. Has activity toward non-glycosylated peptides such as Muc5AC, Muc1a and EA2, and no detectable activity with Muc2 and Muc7. Displays enzymatic activity toward the Gal-NAc-Muc5AC glycopeptide, but no detectable activity to mono-GalNAc-glycosylated Muc1a, Muc2, Muc7 and EA2. May play an important role in the initial step of mucin-type oligosaccharide biosynthesis in digestive organs. In Homo sapiens (Human), this protein is Polypeptide N-acetylgalactosaminyltransferase 12 (GALNT12).